Consider the following 317-residue polypeptide: MDRLELIKRNVQEIVTEEELEGLLNKKETPRAYVGYEPSGKIHMGHVLTVNKLIDLQKAGFKITVLLADVHAYLNRKGTLEEVRKIADYNRRCFIALGLDEEQTDFVYGSDFQLGAEYMLNVLKLSRAVTLNRAKRSMDEVGRAMDDPTVSQMVYPLMQAIDIALLEVDVAVGGIDQRKIHMLARENLKSLGFETPICIHTPILLGLDGTKMASSKDNFISVDDTEEEIYRKFKKAFCKMGDVEENPILALFRYHIFPRYETIVIERPEKFGGNLVYNSYSEMESGFAEEKVHPMDLKNSAAKYINEILDPVRKVLL.

Tyr33 is an L-tyrosine binding site. Positions 38-46 (PSGKIHMGH) match the 'HIGH' region motif. Residues Tyr155, Gln159, Asp162, and Gln177 each contribute to the L-tyrosine site. The 'KMSKS' region motif lies at 211 to 215 (KMASS). Ser214 provides a ligand contact to ATP.

Belongs to the class-I aminoacyl-tRNA synthetase family. TyrS type 3 subfamily. Homodimer.

Its subcellular location is the cytoplasm. It carries out the reaction tRNA(Tyr) + L-tyrosine + ATP = L-tyrosyl-tRNA(Tyr) + AMP + diphosphate + H(+). Its function is as follows. Catalyzes the attachment of tyrosine to tRNA(Tyr) in a two-step reaction: tyrosine is first activated by ATP to form Tyr-AMP and then transferred to the acceptor end of tRNA(Tyr). The polypeptide is Tyrosine--tRNA ligase (Methanosarcina mazei (strain ATCC BAA-159 / DSM 3647 / Goe1 / Go1 / JCM 11833 / OCM 88) (Methanosarcina frisia)).